Here is a 457-residue protein sequence, read N- to C-terminus: ATP synthase subunit beta (457 aa).

147–154 (GGAGVGKT) contributes to the ATP binding site.

It belongs to the ATPase alpha/beta chains family. As to quaternary structure, F-type ATPases have 2 components, CF(1) - the catalytic core - and CF(0) - the membrane proton channel. CF(1) has five subunits: alpha(3), beta(3), gamma(1), delta(1), epsilon(1). CF(0) has three main subunits: a(1), b(2) and c(9-12). The alpha and beta chains form an alternating ring which encloses part of the gamma chain. CF(1) is attached to CF(0) by a central stalk formed by the gamma and epsilon chains, while a peripheral stalk is formed by the delta and b chains.

The protein resides in the cell inner membrane. It carries out the reaction ATP + H2O + 4 H(+)(in) = ADP + phosphate + 5 H(+)(out). Produces ATP from ADP in the presence of a proton gradient across the membrane. The catalytic sites are hosted primarily by the beta subunits. This is ATP synthase subunit beta from Pasteurella multocida (strain Pm70).